Reading from the N-terminus, the 322-residue chain is Ribonucleoside-diphosphate reductase subunit beta nrdF1 (322 aa).

Fe cation contacts are provided by Asp-70, Glu-101, and His-104. The active site involves Tyr-108. The Fe cation site is built by Glu-161, Glu-195, and His-198.

It belongs to the ribonucleoside diphosphate reductase small chain family. In terms of assembly, tetramer of two alpha and two beta subunits. Requires Fe cation as cofactor.

It catalyses the reaction a 2'-deoxyribonucleoside 5'-diphosphate + [thioredoxin]-disulfide + H2O = a ribonucleoside 5'-diphosphate + [thioredoxin]-dithiol. Its function is as follows. Provides the precursors necessary for DNA synthesis. Catalyzes the biosynthesis of deoxyribonucleotides from the corresponding ribonucleotides. The sequence is that of Ribonucleoside-diphosphate reductase subunit beta nrdF1 (nrdF1) from Mycobacterium tuberculosis (strain CDC 1551 / Oshkosh).